The following is a 248-amino-acid chain: uncharacterized protein (248 aa).

8 to 32 (EVALVTGASSGIGKAIALELASAGL) provides a ligand contact to NADP(+). Residue serine 134 coordinates substrate. Tyrosine 147 (proton acceptor) is an active-site residue.

It belongs to the short-chain dehydrogenases/reductases (SDR) family.

This is an uncharacterized protein from Sinorhizobium fredii (strain NBRC 101917 / NGR234).